The chain runs to 343 residues: tRNA N6-adenosine threonylcarbamoyltransferase (343 aa).

Fe cation contacts are provided by His115 and His119. Residues 137 to 141 (IVSGG), Asp170, Gly183, Asp187, and Asn276 contribute to the substrate site. Asp304 lines the Fe cation pocket.

The protein belongs to the KAE1 / TsaD family. Fe(2+) is required as a cofactor.

Its subcellular location is the cytoplasm. It carries out the reaction L-threonylcarbamoyladenylate + adenosine(37) in tRNA = N(6)-L-threonylcarbamoyladenosine(37) in tRNA + AMP + H(+). In terms of biological role, required for the formation of a threonylcarbamoyl group on adenosine at position 37 (t(6)A37) in tRNAs that read codons beginning with adenine. Is involved in the transfer of the threonylcarbamoyl moiety of threonylcarbamoyl-AMP (TC-AMP) to the N6 group of A37, together with TsaE and TsaB. TsaD likely plays a direct catalytic role in this reaction. In Staphylococcus carnosus (strain TM300), this protein is tRNA N6-adenosine threonylcarbamoyltransferase.